We begin with the raw amino-acid sequence, 634 residues long: ABC transporter B family member 29, chloroplastic (634 aa).

Residues 1-51 constitute a chloroplast transit peptide; the sequence is MSFLLLTPPPCLLIPPPPLSHRRSSSLFLKHPFQPSPRPLSFCKPSALRLR. The next 6 helical transmembrane spans lie at 75–95, 119–139, 195–215, 219–239, 307–327, and 330–350; these read TVLL…QIVP, LVLA…QAFL, LLNT…HMIV, ALTL…AYLG, IVQV…VILA, and SLSS…IDPV. In terms of domain architecture, ABC transmembrane type-1 spans 77-362; it reads LLGWLCSCVS…LGKAYNELKQ (286 aa). An ABC transporter domain is found at 396–633; that stretch reads VELCDISFKY…KDSLTSAGLV (238 aa). 430 to 437 is an ATP binding site; the sequence is GPSGGGKT.

The protein belongs to the ABC transporter superfamily. ABCB family. Multidrug resistance exporter (TC 3.A.1.201) subfamily.

The protein localises to the plastid. It is found in the chloroplast membrane. In Arabidopsis thaliana (Mouse-ear cress), this protein is ABC transporter B family member 29, chloroplastic (ABCB29).